The following is a 210-amino-acid chain: Inner membrane-spanning protein YciB (210 aa).

Helical transmembrane passes span 19–39, 53–73, 78–98, 115–135, 148–168, and 175–195; these read LVLE…GDWL, IFIA…VSWI, LPMM…LTLW, LFGA…GYVF, KLTI…EIVW, and FWVA…TLAQ.

The protein belongs to the YciB family.

It is found in the cell inner membrane. Functionally, plays a role in cell envelope biogenesis, maintenance of cell envelope integrity and membrane homeostasis. This is Inner membrane-spanning protein YciB from Sinorhizobium fredii (strain NBRC 101917 / NGR234).